The following is a 260-amino-acid chain: Indole-3-glycerol phosphate synthase (260 aa).

It belongs to the TrpC family.

It carries out the reaction 1-(2-carboxyphenylamino)-1-deoxy-D-ribulose 5-phosphate + H(+) = (1S,2R)-1-C-(indol-3-yl)glycerol 3-phosphate + CO2 + H2O. It participates in amino-acid biosynthesis; L-tryptophan biosynthesis; L-tryptophan from chorismate: step 4/5. The protein is Indole-3-glycerol phosphate synthase of Staphylococcus aureus (strain Mu3 / ATCC 700698).